The sequence spans 649 residues: FAS-associated factor 1 (649 aa).

A UBA domain is found at 1-57 (MASNMDREMILADFQACTGIENIDEAITLLEQNNWDLVAAINGVIPQENGILQSDFG). Disordered regions lie at residues 56-84 (FGGE…SAFR) and 266-290 (RRTS…VSDS). Residues 68-82 (PASHPAPASTPSSSA) show a composition bias toward low complexity. Serine 319 is subject to Phosphoserine. The region spanning 568–645 (NAEPVSKLRI…NLFPQETLFL (78 aa)) is the UBX domain. The residue at position 579 (threonine 579) is a Phosphothreonine. Serine 581 carries the phosphoserine modification.

Interacts with CDT1 and ATPase VCP/p97. Interacts (via UBA domain) with FAS (via death domain). Interacts (via UBA domain) with NLRP12 (via DAPIN/PYRIN domain).

The protein resides in the nucleus. In terms of biological role, ubiquitin-binding protein. Required for the progression of DNA replication forks by targeting DNA replication licensing factor CDT1 for degradation. Potentiates but cannot initiate FAS-induced apoptosis. The polypeptide is FAS-associated factor 1 (Faf1) (Mus musculus (Mouse)).